The following is a 527-amino-acid chain: Protein IQ-DOMAIN 4 (527 aa).

Residues 13–90 (CLSPGKDKKN…PPSPPPPPPA (78 aa)) are disordered. A compositionally biased stretch (basic and acidic residues) spans 17-26 (GKDKKNQKPE). The segment covering 63 to 90 (PYPPPPPLPDFAPQPLLPPPSPPPPPPA) has biased composition (pro residues). The IQ domain maps to 147 to 175 (EETAAIKIQNAYRCYTARRTLRALRGMAR). Positions 256–273 (RSVNRKEASVRRERALAY) are calmodulin-binding. The interval 323–527 (VSVKSSLKRE…EKKRRNGGSS (205 aa)) is disordered. Residues 335–360 (IKSSPARSKTQKSASQSSIQWPVNND) show a composition bias toward polar residues. The span at 361-370 (TKSRKIEVTN) shows a compositional bias: basic and acidic residues. Polar residues-rich tracts occupy residues 399-422 (LDNTQTVKSKVSVETTSNVSNAQT) and 437-455 (NTKTLKSKSSVGTTGNLAN). The span at 471–481 (PKKEVVADKKK) shows a compositional bias: basic and acidic residues. The Nuclear localization signal signature appears at 478-485 (DKKKPPQM).

It belongs to the IQD family. In terms of assembly, binds to multiple calmodulin (CaM) in the presence of Ca(2+) and CaM-like proteins.

It localises to the nucleus. The protein localises to the nucleolus. May be involved in cooperative interactions with calmodulins or calmodulin-like proteins. Recruits calmodulin proteins to microtubules, thus being a potential scaffold in cellular signaling and trafficking. May associate with nucleic acids and regulate gene expression at the transcriptional or post-transcriptional level. The polypeptide is Protein IQ-DOMAIN 4 (Arabidopsis thaliana (Mouse-ear cress)).